A 182-amino-acid polypeptide reads, in one-letter code: Inner membrane assembly complex subunit 17 (182 aa).

The N-terminal 45 residues, Met1–Glu45, are a transit peptide targeting the mitochondrion. Residues Ile46–Pro107 lie on the Mitochondrial matrix side of the membrane. The helical transmembrane segment at Leu108–Trp127 threads the bilayer. Residues Lys128 to Thr158 are a coiled coil. The Mitochondrial intermembrane portion of the chain corresponds to Lys128–Trp182.

Belongs to the INA17 family. Component of the inner membrane assembly (INA) complex, composed of INA17 and INA22. Interacts with a subset of F(1)F(0)-ATP synthase subunits of the F(1)-domain and the peripheral stalk.

Its subcellular location is the mitochondrion inner membrane. In terms of biological role, component of the INA complex (INAC) that promotes the biogenesis of mitochondrial F(1)F(0)-ATP synthase. INAC facilitates the assembly of the peripheral stalk and promotes the assembly of the catalytic F(1)-domain with the membrane-embedded F(0)-domain. The polypeptide is Inner membrane assembly complex subunit 17 (Saccharomyces cerevisiae (strain YJM789) (Baker's yeast)).